The sequence spans 248 residues: MYKLVLIRHGESTWNKENRFTGWVDVDLTEQGNNEAQQAGVLLKESGYTFDIAYTSVLKRAIRTLWHVQDKMDLMYLPVVHSWRLNERHYGALSGLNKAETAAKFGDEQVLVWRRSYDTPPPALEPTDDRAPYNDPRYAKVPREQLPLTECLKDTVARVLPLWNESIAPAIKSGRKVVIAAHGNSIRALVKYLDNISDDDIVGLNIPNGVPLVYELDEDLKPIKHYYLGDQEAIAKAQAAVAKQGKAG.

Substrate contacts are provided by residues 8-15 (RHGESTWN), 21-22 (TG), Arg60, 87-90 (ERHY), Lys98, 114-115 (RR), and 183-184 (GN). His9 acts as the Tele-phosphohistidine intermediate in catalysis. Residue Glu87 is the Proton donor/acceptor of the active site.

It belongs to the phosphoglycerate mutase family. BPG-dependent PGAM subfamily. Homodimer.

The catalysed reaction is (2R)-2-phosphoglycerate = (2R)-3-phosphoglycerate. Its pathway is carbohydrate degradation; glycolysis; pyruvate from D-glyceraldehyde 3-phosphate: step 3/5. Catalyzes the interconversion of 2-phosphoglycerate and 3-phosphoglycerate. The polypeptide is 2,3-bisphosphoglycerate-dependent phosphoglycerate mutase (Paraburkholderia phytofirmans (strain DSM 17436 / LMG 22146 / PsJN) (Burkholderia phytofirmans)).